A 147-amino-acid chain; its full sequence is D-aminoacyl-tRNA deacylase (147 aa).

A Gly-cisPro motif, important for rejection of L-amino acids motif is present at residues 136 to 137 (GP).

Belongs to the DTD family. In terms of assembly, homodimer.

The protein localises to the cytoplasm. The enzyme catalyses glycyl-tRNA(Ala) + H2O = tRNA(Ala) + glycine + H(+). It carries out the reaction a D-aminoacyl-tRNA + H2O = a tRNA + a D-alpha-amino acid + H(+). Its function is as follows. An aminoacyl-tRNA editing enzyme that deacylates mischarged D-aminoacyl-tRNAs. Also deacylates mischarged glycyl-tRNA(Ala), protecting cells against glycine mischarging by AlaRS. Acts via tRNA-based rather than protein-based catalysis; rejects L-amino acids rather than detecting D-amino acids in the active site. By recycling D-aminoacyl-tRNA to D-amino acids and free tRNA molecules, this enzyme counteracts the toxicity associated with the formation of D-aminoacyl-tRNA entities in vivo and helps enforce protein L-homochirality. The protein is D-aminoacyl-tRNA deacylase of Streptococcus suis (strain 98HAH33).